Here is an 88-residue protein sequence, read N- to C-terminus: Small ribosomal subunit protein uS17 (88 aa).

It belongs to the universal ribosomal protein uS17 family. As to quaternary structure, part of the 30S ribosomal subunit.

Its function is as follows. One of the primary rRNA binding proteins, it binds specifically to the 5'-end of 16S ribosomal RNA. This Pseudomonas putida (strain ATCC 700007 / DSM 6899 / JCM 31910 / BCRC 17059 / LMG 24140 / F1) protein is Small ribosomal subunit protein uS17.